The primary structure comprises 104 residues: Large ribosomal subunit protein bL21 (104 aa).

The protein belongs to the bacterial ribosomal protein bL21 family. Part of the 50S ribosomal subunit. Contacts protein L20.

This protein binds to 23S rRNA in the presence of protein L20. This chain is Large ribosomal subunit protein bL21, found in Salinispora tropica (strain ATCC BAA-916 / DSM 44818 / JCM 13857 / NBRC 105044 / CNB-440).